The chain runs to 171 residues: Ribosome maturation factor RimM (171 aa).

The PRC barrel domain maps to 97–170 (EGEYYYHEII…LVTIHVMEGL (74 aa)).

The protein belongs to the RimM family. As to quaternary structure, binds ribosomal protein uS19.

It is found in the cytoplasm. Its function is as follows. An accessory protein needed during the final step in the assembly of 30S ribosomal subunit, possibly for assembly of the head region. Essential for efficient processing of 16S rRNA. May be needed both before and after RbfA during the maturation of 16S rRNA. It has affinity for free ribosomal 30S subunits but not for 70S ribosomes. This chain is Ribosome maturation factor RimM, found in Bacillus thuringiensis (strain Al Hakam).